Here is a 340-residue protein sequence, read N- to C-terminus: Dihydroorotate dehydrogenase (quinone) (340 aa).

FMN is bound by residues A61–K65 and T85. K65 serves as a coordination point for substrate. N110–F114 lines the substrate pocket. Residues N138 and N171 each coordinate FMN. Residue N171 coordinates substrate. S174 (nucleophile) is an active-site residue. N176 contacts substrate. 2 residues coordinate FMN: K216 and T244. N245–T246 provides a ligand contact to substrate. FMN contacts are provided by residues G267, G296, and Y317–S318.

Belongs to the dihydroorotate dehydrogenase family. Type 2 subfamily. In terms of assembly, monomer. FMN is required as a cofactor.

The protein localises to the cell membrane. The enzyme catalyses (S)-dihydroorotate + a quinone = orotate + a quinol. It functions in the pathway pyrimidine metabolism; UMP biosynthesis via de novo pathway; orotate from (S)-dihydroorotate (quinone route): step 1/1. Functionally, catalyzes the conversion of dihydroorotate to orotate with quinone as electron acceptor. The protein is Dihydroorotate dehydrogenase (quinone) of Ectopseudomonas mendocina (strain ymp) (Pseudomonas mendocina).